A 501-amino-acid chain; its full sequence is Dipeptide and tripeptide permease B (501 aa).

The Cytoplasmic portion of the chain corresponds to methionine 1–arginine 27. A helical membrane pass occupies residues phenylalanine 28–serine 48. Over glutamine 49–serine 52 the chain is Periplasmic. The helical transmembrane segment at phenylalanine 53–valine 73 threads the bilayer. Residues glycine 74–arginine 82 are Cytoplasmic-facing. The chain crosses the membrane as a helical span at residues threonine 83–tyrosine 103. The Periplasmic segment spans residues asparagine 104–aspartate 106. The helical transmembrane segment at leucine 107–alanine 127 threads the bilayer. Residues serine 128–threonine 146 are Cytoplasmic-facing. Residues leucine 147–alanine 167 traverse the membrane as a helical segment. Over aspartate 168–tyrosine 172 the chain is Periplasmic. The chain crosses the membrane as a helical span at residues threonine 173 to cysteine 193. The Cytoplasmic segment spans residues arginine 194 to tyrosine 211. A helical transmembrane segment spans residues glycine 212–methionine 232. Residue histidine 233 is a topological domain, periplasmic. Residues histidine 234–phenylalanine 254 form a helical membrane-spanning segment. The Cytoplasmic portion of the chain corresponds to arginine 255 to lysine 267. The helical transmembrane segment at methionine 268 to methionine 288 threads the bilayer. Residues proline 289–proline 311 lie on the Periplasmic side of the membrane. Residues isoleucine 312–isoleucine 332 traverse the membrane as a helical segment. At tyrosine 333 to threonine 350 the chain is on the cytoplasmic side. A helical membrane pass occupies residues leucine 351 to alanine 371. Residues aspartate 372 to tryptophan 380 lie on the Periplasmic side of the membrane. Residues phenylalanine 381–leucine 401 form a helical membrane-spanning segment. The Cytoplasmic segment spans residues alanine 402–arginine 411. A helical transmembrane segment spans residues leucine 412–glycine 432. Residues tyrosine 433–aspartate 456 lie on the Periplasmic side of the membrane. Residues valine 457–proline 477 form a helical membrane-spanning segment. At tryptophan 478–alanine 501 the chain is on the cytoplasmic side.

Belongs to the major facilitator superfamily. Proton-dependent oligopeptide transporter (POT/PTR) (TC 2.A.17) family. DtpB subfamily.

The protein resides in the cell inner membrane. Its function is as follows. Proton-dependent permease that transports di- and tripeptides. The chain is Dipeptide and tripeptide permease B from Aeromonas hydrophila subsp. hydrophila (strain ATCC 7966 / DSM 30187 / BCRC 13018 / CCUG 14551 / JCM 1027 / KCTC 2358 / NCIMB 9240 / NCTC 8049).